The sequence spans 212 residues: Adenylate kinase (212 aa).

10–15 (GAGKGT) is a binding site for ATP. Residues 30–59 (STGDMFRAAMANQTEMGTLAKSFIDKGELV) are NMP. AMP-binding positions include Thr31, Arg36, 57-59 (ELV), 86-89 (GYPR), and Gln93. An LID region spans residues 127–159 (GRIINRKTGETYHKVFNPPADYNEDDYYQREDD). ATP contacts are provided by residues Arg128 and 137–138 (TY). Residues Arg156 and Arg167 each contribute to the AMP site. Gln195 is an ATP binding site.

The protein belongs to the adenylate kinase family. In terms of assembly, monomer.

It is found in the cytoplasm. The catalysed reaction is AMP + ATP = 2 ADP. It functions in the pathway purine metabolism; AMP biosynthesis via salvage pathway; AMP from ADP: step 1/1. Functionally, catalyzes the reversible transfer of the terminal phosphate group between ATP and AMP. Plays an important role in cellular energy homeostasis and in adenine nucleotide metabolism. The sequence is that of Adenylate kinase from Streptococcus mutans serotype c (strain ATCC 700610 / UA159).